Here is a 355-residue protein sequence, read N- to C-terminus: Anhydro-N-acetylmuramic acid kinase (355 aa).

9–16 contributes to the ATP binding site; the sequence is GTSLDGVD.

Belongs to the anhydro-N-acetylmuramic acid kinase family.

The enzyme catalyses 1,6-anhydro-N-acetyl-beta-muramate + ATP + H2O = N-acetyl-D-muramate 6-phosphate + ADP + H(+). It functions in the pathway amino-sugar metabolism; 1,6-anhydro-N-acetylmuramate degradation. The protein operates within cell wall biogenesis; peptidoglycan recycling. In terms of biological role, catalyzes the specific phosphorylation of 1,6-anhydro-N-acetylmuramic acid (anhMurNAc) with the simultaneous cleavage of the 1,6-anhydro ring, generating MurNAc-6-P. Is required for the utilization of anhMurNAc either imported from the medium or derived from its own cell wall murein, and thus plays a role in cell wall recycling. The protein is Anhydro-N-acetylmuramic acid kinase of Paramagnetospirillum magneticum (strain ATCC 700264 / AMB-1) (Magnetospirillum magneticum).